Here is a 227-residue protein sequence, read N- to C-terminus: UPF0173 metal-dependent hydrolase BCAH820_4729 (227 aa).

Belongs to the UPF0173 family.

This Bacillus cereus (strain AH820) protein is UPF0173 metal-dependent hydrolase BCAH820_4729.